The chain runs to 250 residues: NAD(P)H-quinone oxidoreductase subunit K, chloroplastic (250 aa).

[4Fe-4S] cluster contacts are provided by Cys61, Cys62, Cys126, and Cys157.

Belongs to the complex I 20 kDa subunit family. In terms of assembly, NDH is composed of at least 16 different subunits, 5 of which are encoded in the nucleus. [4Fe-4S] cluster is required as a cofactor.

The protein resides in the plastid. The protein localises to the chloroplast thylakoid membrane. The enzyme catalyses a plastoquinone + NADH + (n+1) H(+)(in) = a plastoquinol + NAD(+) + n H(+)(out). It carries out the reaction a plastoquinone + NADPH + (n+1) H(+)(in) = a plastoquinol + NADP(+) + n H(+)(out). Functionally, NDH shuttles electrons from NAD(P)H:plastoquinone, via FMN and iron-sulfur (Fe-S) centers, to quinones in the photosynthetic chain and possibly in a chloroplast respiratory chain. The immediate electron acceptor for the enzyme in this species is believed to be plastoquinone. Couples the redox reaction to proton translocation, and thus conserves the redox energy in a proton gradient. The chain is NAD(P)H-quinone oxidoreductase subunit K, chloroplastic from Angiopteris evecta (Mule's foot fern).